The sequence spans 273 residues: Putative phosphoenolpyruvate synthase regulatory protein (273 aa).

ADP is bound at residue 153 to 160 (GVSRSGKT).

This sequence belongs to the pyruvate, phosphate/water dikinase regulatory protein family. PSRP subfamily.

It carries out the reaction [pyruvate, water dikinase] + ADP = [pyruvate, water dikinase]-phosphate + AMP + H(+). It catalyses the reaction [pyruvate, water dikinase]-phosphate + phosphate + H(+) = [pyruvate, water dikinase] + diphosphate. Bifunctional serine/threonine kinase and phosphorylase involved in the regulation of the phosphoenolpyruvate synthase (PEPS) by catalyzing its phosphorylation/dephosphorylation. The polypeptide is Putative phosphoenolpyruvate synthase regulatory protein (Albidiferax ferrireducens (strain ATCC BAA-621 / DSM 15236 / T118) (Rhodoferax ferrireducens)).